A 672-amino-acid polypeptide reads, in one-letter code: Spermatid perinuclear RNA-binding protein (672 aa).

Positions 5 to 363 (RSFANDDRHV…ALKRPFEDGL (359 aa)) constitute a DZF domain. Disordered regions lie at residues 52–73 (TNKG…GENY) and 349–371 (GAGS…DPNK). A compositionally biased stretch (basic and acidic residues) spans 357 to 371 (RPFEDGLGDDKDPNK). A DRBM 1 domain is found at 387–453 (DLMNALMRLN…AVKVLQAMGY (67 aa)). The segment covering 466–476 (SDEKSDNESKN) has biased composition (basic and acidic residues). The interval 466 to 499 (SDEKSDNESKNETVSSNSSNNTGNSTTETSSTLE) is disordered. Low complexity predominate over residues 477–497 (ETVSSNSSNNTGNSTTETSST). A DRBM 2 domain is found at 510–576 (SGKNPVMELN…ALAALEKLFS (67 aa)). An asymmetric dimethylarginine mark is found at arginine 612 and arginine 617.

As to quaternary structure, interacts with EIF2AK2. Associates with microtubules; it is unsure whether such interaction is direct or indirect.

It localises to the cytoplasm. In terms of biological role, involved in spermatogenesis and sperm function. Plays a role in regulation of cell growth. Binds to double-stranded DNA and RNA. Binds most efficiently to poly(I:C) RNA than to poly(dI:dC) DNA. Binds also to single-stranded poly(G) RNA. Binds non-specifically to the mRNA PRM1 3'-UTR and adenovirus VA RNA. This Pongo abelii (Sumatran orangutan) protein is Spermatid perinuclear RNA-binding protein (STRBP).